Consider the following 185-residue polypeptide: Regulatory protein RecX (185 aa).

It belongs to the RecX family.

It localises to the cytoplasm. Modulates RecA activity. This chain is Regulatory protein RecX, found in Thermobifida fusca (strain YX).